Consider the following 71-residue polypeptide: Prophage lysis protein S homolog EssQ (71 aa).

The protein belongs to the lambda phage S protein family.

The protein is Prophage lysis protein S homolog EssQ (essQ) of Escherichia coli (strain K12).